We begin with the raw amino-acid sequence, 156 residues long: Large ribosomal subunit protein eL29 (156 aa).

The span at 1–26 shows a compositional bias: basic residues; that stretch reads MAKSKNHTTHNQSRKWHRNGIKKPRS. Disordered stretches follow at residues 1–35 and 116–156; these read MAKS…LKGV and RRLC…VKAP. Lys5 carries the N6-methyllysine modification. A Phosphoserine modification is found at Ser31. N6-acetyllysine is present on Lys33. Tandem repeats lie at residues 129 to 136 and 137 to 144. A 2 X 8 AA tandem repeats of A-X-A-K-A-P-A-[KQ] region spans residues 129-144; sequence AEAKAPAKAQAKAPAQ. Low complexity predominate over residues 134–156; the sequence is PAKAQAKAPAQAPKGAQAPVKAP.

The protein belongs to the eukaryotic ribosomal protein eL29 family. As to quaternary structure, component of the large ribosomal subunit.

The protein localises to the cytoplasm. Functionally, component of the large ribosomal subunit. The ribosome is a large ribonucleoprotein complex responsible for the synthesis of proteins in the cell. In Rattus norvegicus (Rat), this protein is Large ribosomal subunit protein eL29 (Rpl29).